Here is a 929-residue protein sequence, read N- to C-terminus: Isoleucine--tRNA ligase (929 aa).

The 'HIGH' region signature appears at 58–68 (PYANGDIHIGH). Residue Glu563 coordinates L-isoleucyl-5'-AMP. Positions 605 to 609 (KMSKS) match the 'KMSKS' region motif. Lys608 lines the ATP pocket. Positions 892, 895, 912, and 915 each coordinate Zn(2+).

Belongs to the class-I aminoacyl-tRNA synthetase family. IleS type 1 subfamily. In terms of assembly, monomer. Zn(2+) is required as a cofactor.

The protein localises to the cytoplasm. It carries out the reaction tRNA(Ile) + L-isoleucine + ATP = L-isoleucyl-tRNA(Ile) + AMP + diphosphate. Functionally, catalyzes the attachment of isoleucine to tRNA(Ile). As IleRS can inadvertently accommodate and process structurally similar amino acids such as valine, to avoid such errors it has two additional distinct tRNA(Ile)-dependent editing activities. One activity is designated as 'pretransfer' editing and involves the hydrolysis of activated Val-AMP. The other activity is designated 'posttransfer' editing and involves deacylation of mischarged Val-tRNA(Ile). The polypeptide is Isoleucine--tRNA ligase (Neisseria gonorrhoeae (strain ATCC 700825 / FA 1090)).